Here is an 852-residue protein sequence, read N- to C-terminus: Homeobox-leucine zipper protein ATHB-14 (852 aa).

A disordered region spans residues 1–25; the sequence is MMMVHSMSRDMMNRESPDKGLDSGK. The span at 7-22 shows a compositional bias: basic and acidic residues; it reads MSRDMMNRESPDKGLD. Residues 22-85 constitute a DNA-binding region (homeobox); sequence DSGKYVRYTP…NRRCREKQRK (64 aa). The stretch at 80–122 forms a coiled coil; sequence REKQRKEAARLQTVNRKLNAMNKLLMEENDRLQKQVSNLVYEN. Positions 80 to 130 are ZIP domain; it reads REKQRKEAARLQTVNRKLNAMNKLLMEENDRLQKQVSNLVYENGHMKHQLH. The span at 130–148 shows a compositional bias: polar residues; the sequence is HTASGTTTDNSCESVVVSG. The interval 130-166 is disordered; sequence HTASGTTTDNSCESVVVSGQQHQQQNPNPQHQQRDAN. Residues 149 to 160 are compositionally biased toward low complexity; the sequence is QQHQQQNPNPQH. The 229-residue stretch at 164-392 folds into the START domain; sequence DANNPAGLLS…IAQETSGEVQ (229 aa).

It belongs to the HD-ZIP homeobox family. Class III subfamily. In terms of assembly, homodimer. Heterodimer with ZPR3. Interacts with ESR1 and ESR2. Interacts with ZPR3. In terms of tissue distribution, expressed in the center of the meristem and on the adaxial side of the leaves.

The protein resides in the nucleus. Its activity is regulated as follows. Inhibited by ZPR3. Probable transcription factor involved in the determination of adaxial-abaxial polarity in ovule primordium. Specifies adaxial leaf fates. The chain is Homeobox-leucine zipper protein ATHB-14 (ATHB-14) from Arabidopsis thaliana (Mouse-ear cress).